The sequence spans 772 residues: Larval serum protein 1 gamma chain (772 aa).

The first 16 residues, 1–16 (MKLTLVILALVACVTA), serve as a signal peptide directing secretion. N-linked (GlcNAc...) asparagine glycosylation is present at N242.

This sequence belongs to the hemocyanin family. In terms of assembly, heterohexamer, composed of three subunits, alpha, beta and gamma. Larval hemolymph.

It is found in the secreted. Its subcellular location is the extracellular space. Its function is as follows. Larval storage protein (LSP) which may serve as a store of amino acids for synthesis of adult proteins. The polypeptide is Larval serum protein 1 gamma chain (Lsp1gamma) (Drosophila melanogaster (Fruit fly)).